Reading from the N-terminus, the 304-residue chain is Aspartate carbamoyltransferase catalytic subunit (304 aa).

Carbamoyl phosphate is bound by residues Arg54 and Thr55. Lys83 contacts L-aspartate. Carbamoyl phosphate-binding residues include Arg104, His132, and Gln135. Positions 165 and 226 each coordinate L-aspartate. 2 residues coordinate carbamoyl phosphate: Leu265 and Pro266.

Belongs to the aspartate/ornithine carbamoyltransferase superfamily. ATCase family. Heterooligomer of catalytic and regulatory chains.

The enzyme catalyses carbamoyl phosphate + L-aspartate = N-carbamoyl-L-aspartate + phosphate + H(+). Its pathway is pyrimidine metabolism; UMP biosynthesis via de novo pathway; (S)-dihydroorotate from bicarbonate: step 2/3. Its function is as follows. Catalyzes the condensation of carbamoyl phosphate and aspartate to form carbamoyl aspartate and inorganic phosphate, the committed step in the de novo pyrimidine nucleotide biosynthesis pathway. In Pyrobaculum neutrophilum (strain DSM 2338 / JCM 9278 / NBRC 100436 / V24Sta) (Thermoproteus neutrophilus), this protein is Aspartate carbamoyltransferase catalytic subunit.